The chain runs to 439 residues: Exodeoxyribonuclease 7 large subunit (439 aa).

This sequence belongs to the XseA family. As to quaternary structure, heterooligomer composed of large and small subunits.

Its subcellular location is the cytoplasm. It carries out the reaction Exonucleolytic cleavage in either 5'- to 3'- or 3'- to 5'-direction to yield nucleoside 5'-phosphates.. Bidirectionally degrades single-stranded DNA into large acid-insoluble oligonucleotides, which are then degraded further into small acid-soluble oligonucleotides. This chain is Exodeoxyribonuclease 7 large subunit, found in Haemophilus influenzae (strain ATCC 51907 / DSM 11121 / KW20 / Rd).